The chain runs to 923 residues: Protein prickle (923 aa).

The disordered stretch occupies residues Met1–Ala196. Over residues Gln11 to Asp34 the composition is skewed to low complexity. The segment covering Pro37–Thr49 has biased composition (basic residues). Composition is skewed to low complexity over residues Arg59–Gly73 and Met106–Met118. Residues Leu122–Ala134 show a composition bias toward gly residues. Composition is skewed to low complexity over residues Ser152–Ser169 and Ser184–Ala196. Residues Gly275–Ile383 form the PET domain. 3 LIM zinc-binding domains span residues Leu382–Lys446, Pro447–Glu507, and Tyr508–Pro570. Disordered regions lie at residues Thr571–Thr668 and Gly703–Asp867. Positions Asn709–Pro718 are enriched in gly residues. Positions Glu738–Pro748 are enriched in polar residues. Positions His777–Gly786 are enriched in basic and acidic residues. Residues Leu792–Gln805 show a composition bias toward polar residues. Residues Ser817–Thr827 show a composition bias toward acidic residues. Residues Gln840–Ala852 show a composition bias toward basic and acidic residues. Positions Arg853 to Ser865 are enriched in low complexity.

The protein belongs to the prickle / espinas / testin family. As to quaternary structure, interacts with dsh; PET and LIM domains interact with dsh DEP domain, in wing cells. Interacts with Vang in photoreceptor cells.

The protein resides in the cell membrane. Functionally, acts in a planar cell polarity (PCP) complex; polarization along the apical/basal axis of epithelial cells. PCP signaling in the wing disk requires the receptor fz and the cytoplasmic proteins dsh and pk. These act in a feedback loop leading to activation of the jnk cascade and subsequent polarized arrangement of hairs and bristles. Dgo and pk compete with one another for dsh binding, thereby modulating fz dsh activity and ensuring tight control over fz PCP signaling. Vang, stan and pk function together to regulate the establishment of tissue polarity in the adult eye. This Anopheles gambiae (African malaria mosquito) protein is Protein prickle.